The chain runs to 122 residues: Sarcocystatin-A (122 aa).

The signal sequence occupies residues 1–20; that stretch reads MKYVLILCVITLATVAYAQP. Residue Gln21 is modified to Pyrrolidone carboxylic acid. Residues 67-71 carry the Secondary area of contact motif; it reads QVVSG.

This sequence belongs to the cystatin family.

In terms of biological role, selectively inhibits the activity of cysteine proteinase of hemocytes, protecting developing adult tissue in pupae from attack by the proteinase. In Sarcophaga peregrina (Flesh fly), this protein is Sarcocystatin-A.